The chain runs to 58 residues: UPF0391 membrane protein VP0082 (58 aa).

The next 2 helical transmembrane spans lie at 4–24 (WMFI…SGIA) and 30–50 (VAQV…VFVI).

This sequence belongs to the UPF0391 family.

The protein resides in the cell membrane. This is UPF0391 membrane protein VP0082 from Vibrio parahaemolyticus serotype O3:K6 (strain RIMD 2210633).